Here is a 103-residue protein sequence, read N- to C-terminus: Large ribosomal subunit protein bL21 (103 aa).

It belongs to the bacterial ribosomal protein bL21 family. As to quaternary structure, part of the 50S ribosomal subunit. Contacts protein L20.

Its function is as follows. This protein binds to 23S rRNA in the presence of protein L20. In Shewanella woodyi (strain ATCC 51908 / MS32), this protein is Large ribosomal subunit protein bL21.